We begin with the raw amino-acid sequence, 395 residues long: Flap endonuclease 1 (395 aa).

The N-domain stretch occupies residues 1–104 (MGIKHLYQLI…GELAKRFQRK (104 aa)). D34 contributes to the Mg(2+) binding site. Residues R47 and R70 each coordinate DNA. 5 residues coordinate Mg(2+): D86, E158, E160, D179, and D181. The tract at residues 122 to 253 (DVEKFSRRTV…STALKLIREH (132 aa)) is I-domain. Residue E158 coordinates DNA. 2 residues coordinate DNA: G231 and D233. D233 lines the Mg(2+) pocket. The interval 341-349 (QQSRLEGFF) is interaction with PCNA. The disordered stretch occupies residues 359–395 (KATLKRKADEKLEEKKKKQKVDAKAKKQAKAKPRTAG). The span at 364 to 383 (RKADEKLEEKKKKQKVDAKA) shows a compositional bias: basic and acidic residues. Residues 384-395 (KKQAKAKPRTAG) are compositionally biased toward basic residues.

The protein belongs to the XPG/RAD2 endonuclease family. FEN1 subfamily. As to quaternary structure, interacts with PCNA. Three molecules of fen1 bind to one PCNA trimer with each molecule binding to one PCNA monomer. PCNA stimulates the nuclease activity without altering cleavage specificity. It depends on Mg(2+) as a cofactor. In terms of processing, phosphorylated. Phosphorylation upon DNA damage induces relocalization to the nuclear plasma.

The protein resides in the nucleus. The protein localises to the nucleolus. Its subcellular location is the nucleoplasm. It localises to the mitochondrion. Structure-specific nuclease with 5'-flap endonuclease and 5'-3' exonuclease activities involved in DNA replication and repair. During DNA replication, cleaves the 5'-overhanging flap structure that is generated by displacement synthesis when DNA polymerase encounters the 5'-end of a downstream Okazaki fragment. It enters the flap from the 5'-end and then tracks to cleave the flap base, leaving a nick for ligation. Also involved in the long patch base excision repair (LP-BER) pathway, by cleaving within the apurinic/apyrimidinic (AP) site-terminated flap. Acts as a genome stabilization factor that prevents flaps from equilibrating into structures that lead to duplications and deletions. Also possesses 5'-3' exonuclease activity on nicked or gapped double-stranded DNA, and exhibits RNase H activity. Also involved in replication and repair of rDNA and in repairing mitochondrial DNA. This is Flap endonuclease 1 (fen1) from Pyrenophora tritici-repentis (strain Pt-1C-BFP) (Wheat tan spot fungus).